A 264-amino-acid polypeptide reads, in one-letter code: Thiazole synthase (264 aa).

The active-site Schiff-base intermediate with DXP is Lys-106. Residues Gly-167, 193 to 194 (AG), and 215 to 216 (NS) each bind 1-deoxy-D-xylulose 5-phosphate.

The protein belongs to the ThiG family. As to quaternary structure, homotetramer. Forms heterodimers with either ThiH or ThiS.

The protein localises to the cytoplasm. It catalyses the reaction [ThiS sulfur-carrier protein]-C-terminal-Gly-aminoethanethioate + 2-iminoacetate + 1-deoxy-D-xylulose 5-phosphate = [ThiS sulfur-carrier protein]-C-terminal Gly-Gly + 2-[(2R,5Z)-2-carboxy-4-methylthiazol-5(2H)-ylidene]ethyl phosphate + 2 H2O + H(+). Its pathway is cofactor biosynthesis; thiamine diphosphate biosynthesis. In terms of biological role, catalyzes the rearrangement of 1-deoxy-D-xylulose 5-phosphate (DXP) to produce the thiazole phosphate moiety of thiamine. Sulfur is provided by the thiocarboxylate moiety of the carrier protein ThiS. In vitro, sulfur can be provided by H(2)S. In Azotobacter vinelandii (strain DJ / ATCC BAA-1303), this protein is Thiazole synthase.